Consider the following 142-residue polypeptide: Mediator of RNA polymerase II transcription subunit 9 (142 aa).

Residues Met1–Asn58 are disordered. Ala2 is subject to N-acetylalanine. Residues Gln17 to Gln49 are compositionally biased toward pro residues. Positions Asp78–Leu134 form a coiled coil. Ser106 carries the post-translational modification Phosphoserine.

It belongs to the Mediator complex subunit 9 family. Component of the Mediator complex, which is composed of MED1, MED4, MED6, MED7, MED8, MED9, MED10, MED11, MED12, MED13, MED13L, MED14, MED15, MED16, MED17, MED18, MED19, MED20, MED21, MED22, MED23, MED24, MED25, MED26, MED27, MED29, MED30, MED31, CCNC, CDK8 and CDC2L6/CDK11. The MED12, MED13, CCNC and CDK8 subunits form a distinct module termed the CDK8 module. Mediator containing the CDK8 module is less active than Mediator lacking this module in supporting transcriptional activation. Individual preparations of the Mediator complex lacking one or more distinct subunits have been variously termed ARC, CRSP, DRIP, PC2, SMCC and TRAP.

The protein resides in the nucleus. Functionally, component of the Mediator complex, a coactivator involved in the regulated transcription of nearly all RNA polymerase II-dependent genes. Mediator functions as a bridge to convey information from gene-specific regulatory proteins to the basal RNA polymerase II transcription machinery. Mediator is recruited to promoters by direct interactions with regulatory proteins and serves as a scaffold for the assembly of a functional preinitiation complex with RNA polymerase II and the general transcription factors. This chain is Mediator of RNA polymerase II transcription subunit 9 (Med9), found in Mus musculus (Mouse).